A 173-amino-acid polypeptide reads, in one-letter code: Crossover junction endodeoxyribonuclease RuvC (173 aa).

Residues D8, E67, and D139 contribute to the active site. The Mg(2+) site is built by D8, E67, and D139.

It belongs to the RuvC family. Homodimer which binds Holliday junction (HJ) DNA. The HJ becomes 2-fold symmetrical on binding to RuvC with unstacked arms; it has a different conformation from HJ DNA in complex with RuvA. In the full resolvosome a probable DNA-RuvA(4)-RuvB(12)-RuvC(2) complex forms which resolves the HJ. Mg(2+) serves as cofactor.

The protein resides in the cytoplasm. It carries out the reaction Endonucleolytic cleavage at a junction such as a reciprocal single-stranded crossover between two homologous DNA duplexes (Holliday junction).. Its function is as follows. The RuvA-RuvB-RuvC complex processes Holliday junction (HJ) DNA during genetic recombination and DNA repair. Endonuclease that resolves HJ intermediates. Cleaves cruciform DNA by making single-stranded nicks across the HJ at symmetrical positions within the homologous arms, yielding a 5'-phosphate and a 3'-hydroxyl group; requires a central core of homology in the junction. The consensus cleavage sequence is 5'-(A/T)TT(C/G)-3'. Cleavage occurs on the 3'-side of the TT dinucleotide at the point of strand exchange. HJ branch migration catalyzed by RuvA-RuvB allows RuvC to scan DNA until it finds its consensus sequence, where it cleaves and resolves the cruciform DNA. The sequence is that of Crossover junction endodeoxyribonuclease RuvC from Shewanella oneidensis (strain ATCC 700550 / JCM 31522 / CIP 106686 / LMG 19005 / NCIMB 14063 / MR-1).